Here is a 132-residue protein sequence, read N- to C-terminus: MAGTLQFDLVSPERRLASFAATEVQVPGTDGDMTAMEGHAPTITTLRPGILRAQGPSGVQAYAVTGGFAEINATSISVLAEKAVAVEELTGTVLDEFIAEARELVSVALPEDKDMAERTLNDMLALRASAGH.

This sequence belongs to the ATPase epsilon chain family. F-type ATPases have 2 components, CF(1) - the catalytic core - and CF(0) - the membrane proton channel. CF(1) has five subunits: alpha(3), beta(3), gamma(1), delta(1), epsilon(1). CF(0) has three main subunits: a, b and c.

Its subcellular location is the cell inner membrane. In terms of biological role, produces ATP from ADP in the presence of a proton gradient across the membrane. The protein is ATP synthase epsilon chain of Cereibacter sphaeroides (strain ATCC 17025 / ATH 2.4.3) (Rhodobacter sphaeroides).